Here is a 1222-residue protein sequence, read N- to C-terminus: Kinesin-related protein 9 (1222 aa).

The span at 1-25 (MDNNNNNFSTPKQPTINSTTGGQLR) shows a compositional bias: polar residues. Disordered stretches follow at residues 1 to 55 (MDNN…ITNS), 75 to 165 (MDSL…STNI), and 188 to 343 (SSNT…TQPL). Residues 26–55 (SRSNSSPSTSSISTPRNGSTTATTSSITNS) are compositionally biased toward low complexity. The span at 75-85 (MDSLSTPMSQS) shows a compositional bias: polar residues. Low complexity-rich tracts occupy residues 122–165 (SFIS…STNI), 194–209 (SSLP…PLSN), 216–238 (NHHL…ISTT), and 254–325 (NLTT…RTPI). The span at 326-343 (QNFNSVGGVNITSKTQPL) shows a compositional bias: polar residues. The Kinesin motor domain occupies 350 to 719 (SIQAVCRFRP…LNFGQRAQSV (370 aa)). 438–445 (GQTGAGKT) contributes to the ATP binding site. A coiled-coil region spans residues 724-1026 (LQNVEESHSE…DTLTNKLEIQ (303 aa)). Residues 1144 to 1174 (NINNNNNIKNNNNNNKLKSKKVGSSSSSSSN) form a disordered region. A helical membrane pass occupies residues 1183–1203 (ILFFLIILVILFFLMVAVGLT).

This sequence belongs to the TRAFAC class myosin-kinesin ATPase superfamily. Kinesin family.

Its subcellular location is the membrane. It localises to the cytoplasm. It is found in the cytoskeleton. Functionally, microtubule-associated force-producing protein that plays a role in organelle transport. Its motor activity is directed toward the microtubule's plus end. The polypeptide is Kinesin-related protein 9 (kif9) (Dictyostelium discoideum (Social amoeba)).